Reading from the N-terminus, the 238-residue chain is Protein MIS12 homolog (238 aa).

Positions 117–149 (ELDAELDSLRDKLNVVGKRSVELDSELQALERS) form a coiled coil.

The protein belongs to the mis12 family.

The protein localises to the chromosome. It localises to the centromere. Its subcellular location is the kinetochore. Functionally, constitutive component of kinetochores that is essential for proper cell division during mitotic cell cycle. May play a role in the modulation of centromere during meiosis. This Arabidopsis thaliana (Mouse-ear cress) protein is Protein MIS12 homolog.